The chain runs to 1402 residues: Defective in tip formation protein A (1402 aa).

Disordered regions lie at residues Met1 to Ile20, Asn37 to Val94, Asn109 to Ile133, and Lys210 to Lys292. 2 tandem repeats follow at residues Thr12 to Pro18 and Thr40 to Pro46. Residues Thr12–Gln92 are 4 X 7 AA repeat of T-T-T-[IV]-[AQ]-P-P. Residues Val38–Gln47 are compositionally biased toward low complexity. Over residues Ile48–Pro58 the composition is skewed to pro residues. Low complexity predominate over residues Gln59 to Val94. 2 consecutive repeat copies span residues Thr60 to Pro66 and Thr86 to Gln92. A compositionally biased stretch (low complexity) spans Lys210–Lys234. A compositionally biased stretch (pro residues) spans Gln235–Leu253. Positions Leu254–Gln279 are enriched in low complexity. The stretch at Gln350–Lys383 forms a coiled coil. Disordered regions lie at residues Asp429–Thr453 and Asn712–Asn745. A compositionally biased stretch (low complexity) spans Gln430–Thr453.

It localises to the cell surface. Functionally, required for correct organization of the actin cytoskeleton and cytokinesis. Also required for apical sorting of prestalk cells, a prerequisite for formation of the tip at the mound stage and subsequent formation of the fruiting body. May be required for cell adhesion. This Dictyostelium discoideum (Social amoeba) protein is Defective in tip formation protein A (dtfA).